The chain runs to 552 residues: SLVKSDQICIGYHANNSTEQVDTIMEKNVTVTHAQDILEKTHNGKLCDLDGVKPLILRDCSVAGWLLGNPMCDEFINVPEWSYIVEKASPANDLCYPGDFNDYEELKHLLSRINHFEKIQIIPKSSWSNHEASSGVSSACPYLGKSSFFRNVVWLIKKNSAYPTIKRSYNNTNQEDLLVLWGIHHPNDAAEQTKLYQNPTTYISVGTSTLNQRLVPKIATRSKVNGQSGRMEFFWTILKPNDAINFESNGNFIAPEYAYKIVKKGDSAIMKSELEYGNCNTKCQTPMGAINSSMPFHNIHPLTIGECPKYVKSNRLVLATGLRNTPQRERRRKKRGLFGAIAGFIEGGWQGMVDGWYGYHHSNEQGSGYAADKESTQKAIDGVTNKVNSIIDKMNTQFEAVGREFNNLERRIENLNKKMEDGFLDVWTYNAELLVLMENERTLDFHDSNVKNLYDKVRLQLRDNAKELGNGCFEFYHKCDNECMESVKNGTYDYPQYSEEARLNREEISGVKLESMGTYQILSIYSTVASSLTLAIMVAGLSLWMCSNGSLQ.

Residues 1–520 (SLVKSDQICI…VKLESMGTYQ (520 aa)) are Extracellular-facing. Cystine bridges form between cysteine 9/cysteine 472, cysteine 47/cysteine 279, cysteine 60/cysteine 72, cysteine 95/cysteine 140, cysteine 283/cysteine 307, and cysteine 479/cysteine 483. 3 N-linked (GlcNAc...) asparagine; by host glycosylation sites follow: asparagine 15, asparagine 16, and asparagine 28. Asparagine 170 and asparagine 291 each carry an N-linked (GlcNAc...) asparagine; by host glycan. Asparagine 489 carries an N-linked (GlcNAc...) asparagine; by host glycan. Residues 521-541 (ILSIYSTVASSLTLAIMVAGL) form a helical membrane-spanning segment. Residues 542 to 552 (SLWMCSNGSLQ) are Cytoplasmic-facing. The S-palmitoyl cysteine; by host moiety is linked to residue cysteine 546.

It belongs to the influenza viruses hemagglutinin family. As to quaternary structure, homotrimer of disulfide-linked HA1-HA2. Post-translationally, palmitoylated. In terms of processing, in natural infection, inactive HA is matured into HA1 and HA2 outside the cell by one or more trypsin-like, arginine-specific endoprotease secreted by the bronchial epithelial cells. One identified protease that may be involved in this process is secreted in lungs by club cells.

It localises to the virion membrane. Its subcellular location is the host apical cell membrane. In terms of biological role, binds to sialic acid-containing receptors on the cell surface, bringing about the attachment of the virus particle to the cell. This attachment induces virion internalization either through clathrin-dependent endocytosis or through clathrin- and caveolin-independent pathway. Plays a major role in the determination of host range restriction and virulence. Class I viral fusion protein. Responsible for penetration of the virus into the cell cytoplasm by mediating the fusion of the membrane of the endocytosed virus particle with the endosomal membrane. Low pH in endosomes induces an irreversible conformational change in HA2, releasing the fusion hydrophobic peptide. Several trimers are required to form a competent fusion pore. This chain is Hemagglutinin, found in Influenza A virus (strain A/Chicken/Hong Kong/YU562/2001 H5N1 genotype B).